The primary structure comprises 1507 residues: Chromatin-remodeling ATPase INO80 (1507 aa).

2 disordered regions span residues 30-82 (PEDE…DAED) and 428-452 (RKKQ…KRQQ). The segment covering 38–67 (GSSSQDESRSTQGGVVANYSNGSKSRMNAS) has biased composition (polar residues). The DBINO domain occupies 350 to 475 (AWINIVRRDI…SHFMQNKTDS (126 aa)). The segment covering 428 to 450 (RKKQEKEAAEAFKREQEQRESKR) has biased composition (basic and acidic residues). In terms of domain architecture, Helicase ATP-binding spans 598–769 (VNCYEQGLNG…WALLHFIMPM (172 aa)). 611–618 (DEMGLGKT) provides a ligand contact to ATP. A Helicase C-terminal domain is found at 1210–1360 (TLDILLKRLR…QLVMTGGHVQ (151 aa)). The disordered stretch occupies residues 1415 to 1507 (LEELEDVDRQ…KGFDPSSSAN (93 aa)). Polar residues predominate over residues 1491 to 1507 (ASVTESNKGFDPSSSAN).

Belongs to the SNF2/RAD54 helicase family. As to quaternary structure, component of the INO80 chromatin-remodeling complex. Associates with REF6/EIN6.

It localises to the nucleus. It catalyses the reaction ATP + H2O = ADP + phosphate + H(+). ATPase component of the chromatin remodeling INO80 complex which is involved in transcriptional regulation, DNA replication and DNA repair. Binds DNA. As part of the INO80 complex, remodels chromatin by shifting nucleosomes. The INO80 complex controls ethylene-induced H2A.Z eviction dynamics. Positive regulator of homologous recombination, but not an essential component of homologous recombination. Not involved in the illegitimate repair pathway. This Arabidopsis thaliana (Mouse-ear cress) protein is Chromatin-remodeling ATPase INO80.